Consider the following 157-residue polypeptide: Cyclic pyranopterin monophosphate synthase (157 aa).

Substrate is bound by residues 73–75 (LCH) and 110–111 (ME). Residue Asp-125 is part of the active site.

It belongs to the MoaC family. Homohexamer; trimer of dimers.

The enzyme catalyses (8S)-3',8-cyclo-7,8-dihydroguanosine 5'-triphosphate = cyclic pyranopterin phosphate + diphosphate. It functions in the pathway cofactor biosynthesis; molybdopterin biosynthesis. Its function is as follows. Catalyzes the conversion of (8S)-3',8-cyclo-7,8-dihydroguanosine 5'-triphosphate to cyclic pyranopterin monophosphate (cPMP). In Pseudomonas fluorescens (strain SBW25), this protein is Cyclic pyranopterin monophosphate synthase.